The primary structure comprises 450 residues: WD repeat-containing protein ATCSA-1 (450 aa).

WD repeat units follow at residues 41–81 (PHRG…DYEA), 101–141 (GHKY…AVVD), 148–185 (VYRT…FSHT), and 188–228 (GHRD…CFRV). The segment at 269–298 (LQSKQTGSQSVKGSSSAKASVEKSRQKRIH) is disordered. A compositionally biased stretch (low complexity) spans 271–287 (SKQTGSQSVKGSSSAKA). WD repeat units follow at residues 310–349 (AHYG…NTLV) and 397–436 (GHYE…EDEM).

As to quaternary structure, interacts with DDB1A. Expressed in roots, leaves, stems, flowers and siliques.

Its subcellular location is the nucleus. Its function is as follows. Involved in UV-B tolerance and genome integrity. In association with DDB2, is necessary for repair of UV-B-induced DNA lesions. This chain is WD repeat-containing protein ATCSA-1, found in Arabidopsis thaliana (Mouse-ear cress).